The chain runs to 1684 residues: Protein Wiz (1684 aa).

The tract at residues 1–77 (MEGLLAGGLA…PGLSEALPRA (77 aa)) is disordered. Positions 13 to 24 (DHPRGPAPREDI) are enriched in basic and acidic residues. 5 C2H2-type zinc fingers span residues 308–330 (FPCI…MSQH), 345–367 (LACS…WQLH), 454–477 (NTCV…RLVH), 734–756 (RKCP…VRGH), and 802–824 (MRCD…ARAH). Residues 854 to 876 (LPPSPLGREPGGPPRSFLTSRRP) are disordered. Residues 903-925 (TTCEVCGACFETRKGLSSHARSH) form a C2H2-type 6 zinc finger. Glycyl lysine isopeptide (Lys-Gly) (interchain with G-Cter in SUMO2) cross-links involve residues lysine 916, lysine 972, lysine 988, lysine 1000, and lysine 1021. Residues 1005-1072 (FSAKGLTHPS…PLNLTSGPEP (68 aa)) are disordered. Position 1029 is a phosphoserine (serine 1029). Threonine 1031 is modified (phosphothreonine). Glycyl lysine isopeptide (Lys-Gly) (interchain with G-Cter in SUMO2) cross-links involve residues lysine 1033 and lysine 1038. A phosphoserine mark is found at serine 1039 and serine 1045. The span at 1040–1057 (PQLSLSPRPTSPKAQWPQ) shows a compositional bias: polar residues. Threonine 1049 carries the phosphothreonine modification. Residues serine 1050 and serine 1058 each carry the phosphoserine modification. The segment at 1063 to 1067 (PLNLT) is interaction with CTBP1 and CTBP2 1. A C2H2-type 7 zinc finger spans residues 1076–1098 (IRCEFCGEFFENRKGLSSHARSH). A Glycyl lysine isopeptide (Lys-Gly) (interchain with G-Cter in SUMO2) cross-link involves residue lysine 1089. Phosphoserine is present on residues serine 1112 and serine 1139. The tract at residues 1127–1208 (SRPGGHLHPP…GLATPSLPKK (82 aa)) is disordered. Residues lysine 1141 and lysine 1145 each participate in a glycyl lysine isopeptide (Lys-Gly) (interchain with G-Cter in SUMO2) cross-link. Phosphoserine is present on residues serine 1155, serine 1160, and serine 1167. Glycyl lysine isopeptide (Lys-Gly) (interchain with G-Cter in SUMO2) cross-links involve residues lysine 1171 and lysine 1172. 2 positions are modified to phosphoserine: serine 1179 and serine 1184. Lysine 1195 bears the N6,N6,N6-trimethyllysine; by EHMT2; alternate mark. Residue lysine 1195 is modified to N6,N6-dimethyllysine; by EHMT2; alternate. Lysine 1210 is covalently cross-linked (Glycyl lysine isopeptide (Lys-Gly) (interchain with G-Cter in SUMO2)). The tract at residues 1247–1251 (PLNLS) is interaction with CTBP1 and CTBP2 2. The C2H2-type 8 zinc-finger motif lies at 1260-1282 (IRCEFCGEFFENRKGLSSHARSH). A Glycyl lysine isopeptide (Lys-Gly) (interchain with G-Cter in SUMO2) cross-link involves residue lysine 1273. Serine 1296 is subject to Phosphoserine. Lysine 1315 is covalently cross-linked (Glycyl lysine isopeptide (Lys-Gly) (interchain with G-Cter in SUMO2)). The interval 1320–1384 (AGDLAPALTE…SKPSAASYLG (65 aa)) is disordered. The segment covering 1335-1351 (AAPGALHSPLPLSPLAS) has biased composition (low complexity). Phosphoserine occurs at positions 1342 and 1347. Residues lysine 1376, lysine 1389, lysine 1403, lysine 1405, and lysine 1415 each participate in a glycyl lysine isopeptide (Lys-Gly) (interchain with G-Cter in SUMO2) cross-link. The C2H2-type 9 zinc finger occupies 1430–1452 (ACCELCGLYFENRKALASHARAH). Glycyl lysine isopeptide (Lys-Gly) (interchain with G-Cter in SUMO2) cross-links involve residues lysine 1481, lysine 1497, and lysine 1510. 2 disordered regions span residues 1496 to 1587 (TKKF…GEEV) and 1592 to 1611 (QKLE…PSLV). Residue serine 1550 is modified to Phosphoserine. Residue lysine 1556 forms a Glycyl lysine isopeptide (Lys-Gly) (interchain with G-Cter in SUMO1); alternate linkage. Lysine 1556 participates in a covalent cross-link: Glycyl lysine isopeptide (Lys-Gly) (interchain with G-Cter in SUMO2); alternate. Positions 1556–1574 (KSEEHQRQNINKFERRQAR) are enriched in basic and acidic residues. Residues lysine 1567 and lysine 1593 each participate in a glycyl lysine isopeptide (Lys-Gly) (interchain with G-Cter in SUMO2) cross-link. Residues 1599–1611 (QPPPRVRPVPSLV) are compositionally biased toward pro residues. The segment at 1629–1655 (LKCRFCEVEFQGPLSIQEEWVRHLQRH) adopts a C2H2-type 10 zinc-finger fold. A disordered region spans residues 1662–1684 (SKADPPPEEPQAPQAQTAAVEAP). A Glycyl lysine isopeptide (Lys-Gly) (interchain with G-Cter in SUMO2) cross-link involves residue lysine 1663. The segment covering 1672–1684 (QAPQAQTAAVEAP) has biased composition (low complexity).

The protein belongs to the krueppel C2H2-type zinc-finger protein family. In terms of assembly, part of a complex containing at least CDYL, REST, WIZ, SETB1, EHMT1 and EHMT2. Interacts with EHMT1, EHMT2, CTBP1 and CTBP2. In terms of tissue distribution, according to PubMed:9795207, isoform L and isoform S are brain-specific. According to PubMed:16702210, isoform S is ubiquitously expressed.

The protein resides in the nucleus. Its function is as follows. May link EHMT1 and EHMT2 histone methyltransferases to the CTBP corepressor machinery. May be involved in EHMT1-EHMT2 heterodimer formation and stabilization. In Mus musculus (Mouse), this protein is Protein Wiz (Wiz).